The sequence spans 315 residues: Protein FRA10AC1 (315 aa).

Methionine 1 is modified (N-acetylmethionine). The interval 1–28 is disordered; sequence MHGHGGYDSDFSDDERCGESSKRKKRTV. Phosphoserine occurs at positions 9 and 12. Lysine 36 carries the post-translational modification N6-acetyllysine. The segment covering 226 to 235 has biased composition (basic residues); it reads EIKSKKRKDK. The interval 226 to 315 is disordered; sequence EIKSKKRKDK…FDEYFQDLFL (90 aa). A compositionally biased stretch (basic and acidic residues) spans 236 to 245; the sequence is TKKDCEESSH. Residues serine 251, serine 252, serine 278, serine 283, and serine 285 each carry the phosphoserine modification. Residues 268–278 show a composition bias toward basic and acidic residues; it reads KKSEDSLLRNS. Positions 301–315 are enriched in acidic residues; that stretch reads SQEEEFDEYFQDLFL.

Interacts with ESS2. In terms of tissue distribution, ubiquitously expressed with higher expression in brain, heart, skeletal muscle, kidney and liver.

The protein localises to the nucleus. Its function is as follows. May be involved in pre-mRNA splicing. This is Protein FRA10AC1 (FRA10AC1) from Homo sapiens (Human).